The sequence spans 377 residues: Glutamate 5-kinase (377 aa).

Residue K22 participates in ATP binding. 3 residues coordinate substrate: S62, D149, and N161. ATP-binding positions include 181-182 (TD) and 223-229 (TGGMVTK). Positions 285 to 363 (RGAIVVDAGA…AQLKRFLGPQ (79 aa)) constitute a PUA domain.

Belongs to the glutamate 5-kinase family.

The protein localises to the cytoplasm. It catalyses the reaction L-glutamate + ATP = L-glutamyl 5-phosphate + ADP. The protein operates within amino-acid biosynthesis; L-proline biosynthesis; L-glutamate 5-semialdehyde from L-glutamate: step 1/2. In terms of biological role, catalyzes the transfer of a phosphate group to glutamate to form L-glutamate 5-phosphate. The sequence is that of Glutamate 5-kinase from Bifidobacterium longum subsp. infantis (strain ATCC 15697 / DSM 20088 / JCM 1222 / NCTC 11817 / S12).